A 99-amino-acid polypeptide reads, in one-letter code: CLAVATA3/ESR (CLE)-related protein 11 (99 aa).

The signal sequence occupies residues 1–31; the sequence is MTKQPKPCSFLFHISLLSALFVFLLISFAFT. Hydroxyproline occurs at positions 91 and 94. P94 carries an O-linked (Ara...) hydroxyproline glycan.

This sequence belongs to the CLV3/ESR signal peptide family. Post-translationally, the O-glycosylation (arabinosylation) of the hydroxyproline Pro-94 enhances binding affinity of the CLE11p peptide for its receptor. Mostly expressed in seedlings, roots and siliques, and, to a lower extent, in leaves, flowers, stems and apex.

The protein localises to the secreted. It localises to the extracellular space. Functionally, extracellular signal peptide that regulates cell fate. Represses root apical meristem maintenance. Regulates the transition of protophloem cells from proliferation to differentiation, thus impinging on postembryonic growth capacity of the root meristem; this signaling pathway requires CRN and CLV2. This Arabidopsis thaliana (Mouse-ear cress) protein is CLAVATA3/ESR (CLE)-related protein 11.